We begin with the raw amino-acid sequence, 147 residues long: 3-hydroxyacyl-[acyl-carrier-protein] dehydratase FabZ (147 aa).

The active site involves histidine 48.

It belongs to the thioester dehydratase family. FabZ subfamily.

It localises to the cytoplasm. The enzyme catalyses a (3R)-hydroxyacyl-[ACP] = a (2E)-enoyl-[ACP] + H2O. In terms of biological role, involved in unsaturated fatty acids biosynthesis. Catalyzes the dehydration of short chain beta-hydroxyacyl-ACPs and long chain saturated and unsaturated beta-hydroxyacyl-ACPs. This chain is 3-hydroxyacyl-[acyl-carrier-protein] dehydratase FabZ, found in Aliarcobacter butzleri (strain RM4018) (Arcobacter butzleri).